A 295-amino-acid chain; its full sequence is Indole-3-glycerol phosphate synthase (295 aa).

Belongs to the TrpC family.

It catalyses the reaction 1-(2-carboxyphenylamino)-1-deoxy-D-ribulose 5-phosphate + H(+) = (1S,2R)-1-C-(indol-3-yl)glycerol 3-phosphate + CO2 + H2O. It participates in amino-acid biosynthesis; L-tryptophan biosynthesis; L-tryptophan from chorismate: step 4/5. The sequence is that of Indole-3-glycerol phosphate synthase from Prochlorococcus marinus (strain MIT 9211).